Consider the following 208-residue polypeptide: FMN-dependent NADH:quinone oxidoreductase 3 (208 aa).

It belongs to the azoreductase type 1 family. In terms of assembly, homodimer. The cofactor is FMN.

The catalysed reaction is 2 a quinone + NADH + H(+) = 2 a 1,4-benzosemiquinone + NAD(+). The enzyme catalyses N,N-dimethyl-1,4-phenylenediamine + anthranilate + 2 NAD(+) = 2-(4-dimethylaminophenyl)diazenylbenzoate + 2 NADH + 2 H(+). Quinone reductase that provides resistance to thiol-specific stress caused by electrophilic quinones. In terms of biological role, also exhibits azoreductase activity. Catalyzes the reductive cleavage of the azo bond in aromatic azo compounds to the corresponding amines. The polypeptide is FMN-dependent NADH:quinone oxidoreductase 3 (Bacillus cereus (strain ATCC 14579 / DSM 31 / CCUG 7414 / JCM 2152 / NBRC 15305 / NCIMB 9373 / NCTC 2599 / NRRL B-3711)).